We begin with the raw amino-acid sequence, 221 residues long: Cytidylate kinase 1 (221 aa).

7–15 (GPSASGKSS) provides a ligand contact to ATP.

The protein belongs to the cytidylate kinase family. Type 1 subfamily.

The protein resides in the cytoplasm. The enzyme catalyses CMP + ATP = CDP + ADP. It carries out the reaction dCMP + ATP = dCDP + ADP. This chain is Cytidylate kinase 1, found in Borrelia garinii subsp. bavariensis (strain ATCC BAA-2496 / DSM 23469 / PBi) (Borreliella bavariensis).